A 261-amino-acid polypeptide reads, in one-letter code: Cytochrome c oxidase subunit 3 (261 aa).

6 consecutive transmembrane segments (helical) span residues 31-51 (LVLWFHTGNIILLFTGLLLLI), 82-102 (PMILFITSEVCFFFAFFWAFF), 126-146 (PFLVPLLNTAVLLSSGVTITW), 159-179 (AIQALFLTVVLGIYFTILQAW), 197-217 (FFVATGFHGLHVIIGTTFLLV), and 239-259 (AWYWHFVDVVWLFLYVCIYWW).

This sequence belongs to the cytochrome c oxidase subunit 3 family. Component of the cytochrome c oxidase (complex IV, CIV), a multisubunit enzyme composed of a catalytic core of 3 subunits and several supernumerary subunits. The complex exists as a monomer or a dimer and forms supercomplexes (SCs) in the inner mitochondrial membrane with ubiquinol-cytochrome c oxidoreductase (cytochrome b-c1 complex, complex III, CIII).

The protein localises to the mitochondrion inner membrane. The enzyme catalyses 4 Fe(II)-[cytochrome c] + O2 + 8 H(+)(in) = 4 Fe(III)-[cytochrome c] + 2 H2O + 4 H(+)(out). Its function is as follows. Component of the cytochrome c oxidase, the last enzyme in the mitochondrial electron transport chain which drives oxidative phosphorylation. The respiratory chain contains 3 multisubunit complexes succinate dehydrogenase (complex II, CII), ubiquinol-cytochrome c oxidoreductase (cytochrome b-c1 complex, complex III, CIII) and cytochrome c oxidase (complex IV, CIV), that cooperate to transfer electrons derived from NADH and succinate to molecular oxygen, creating an electrochemical gradient over the inner membrane that drives transmembrane transport and the ATP synthase. Cytochrome c oxidase is the component of the respiratory chain that catalyzes the reduction of oxygen to water. Electrons originating from reduced cytochrome c in the intermembrane space (IMS) are transferred via the dinuclear copper A center (CU(A)) of subunit 2 and heme A of subunit 1 to the active site in subunit 1, a binuclear center (BNC) formed by heme A3 and copper B (CU(B)). The BNC reduces molecular oxygen to 2 water molecules using 4 electrons from cytochrome c in the IMS and 4 protons from the mitochondrial matrix. In Paracentrotus lividus (Common sea urchin), this protein is Cytochrome c oxidase subunit 3 (COIII).